Reading from the N-terminus, the 329-residue chain is DNA-directed RNA polymerase subunit alpha (329 aa).

The tract at residues Met1 to Arg235 is alpha N-terminal domain (alpha-NTD). The interval Phe249–Glu329 is alpha C-terminal domain (alpha-CTD).

This sequence belongs to the RNA polymerase alpha chain family. Homodimer. The RNAP catalytic core consists of 2 alpha, 1 beta, 1 beta' and 1 omega subunit. When a sigma factor is associated with the core the holoenzyme is formed, which can initiate transcription.

It catalyses the reaction RNA(n) + a ribonucleoside 5'-triphosphate = RNA(n+1) + diphosphate. In terms of biological role, DNA-dependent RNA polymerase catalyzes the transcription of DNA into RNA using the four ribonucleoside triphosphates as substrates. In Buchnera aphidicola subsp. Acyrthosiphon pisum (strain APS) (Acyrthosiphon pisum symbiotic bacterium), this protein is DNA-directed RNA polymerase subunit alpha.